The primary structure comprises 114 residues: Cytochrome b-c1 complex subunit 1, mitochondrial (114 aa).

K31 is subject to N6-acetyllysine.

Belongs to the peptidase M16 family. UQCRC1/QCR1 subfamily. As to quaternary structure, component of the ubiquinol-cytochrome c oxidoreductase (cytochrome b-c1 complex, complex III, CIII), a multisubunit enzyme composed of 11 subunits. The complex is composed of 3 respiratory subunits cytochrome b, cytochrome c1 and Rieske protein UQCRFS1, 2 core protein subunits UQCRC1/QCR1 and UQCRC2/QCR2, and 6 low-molecular weight protein subunits UQCRH/QCR6, UQCRB/QCR7, UQCRQ/QCR8, UQCR10/QCR9, UQCR11/QCR10 and subunit 9, the cleavage product of Rieske protein UQCRFS1. The complex exists as an obligatory dimer and forms supercomplexes (SCs) in the inner mitochondrial membrane with NADH-ubiquinone oxidoreductase (complex I, CI) and cytochrome c oxidase (complex IV, CIV), resulting in different assemblies (supercomplex SCI(1)III(2)IV(1) and megacomplex MCI(2)III(2)IV(2)). Interacts with UQCC6. Interacts with STMP1.

It is found in the mitochondrion inner membrane. Functionally, component of the ubiquinol-cytochrome c oxidoreductase, a multisubunit transmembrane complex that is part of the mitochondrial electron transport chain which drives oxidative phosphorylation. The respiratory chain contains 3 multisubunit complexes succinate dehydrogenase (complex II, CII), ubiquinol-cytochrome c oxidoreductase (cytochrome b-c1 complex, complex III, CIII) and cytochrome c oxidase (complex IV, CIV), that cooperate to transfer electrons derived from NADH and succinate to molecular oxygen, creating an electrochemical gradient over the inner membrane that drives transmembrane transport and the ATP synthase. The cytochrome b-c1 complex catalyzes electron transfer from ubiquinol to cytochrome c, linking this redox reaction to translocation of protons across the mitochondrial inner membrane, with protons being carried across the membrane as hydrogens on the quinol. In the process called Q cycle, 2 protons are consumed from the matrix, 4 protons are released into the intermembrane space and 2 electrons are passed to cytochrome c. The 2 core subunits UQCRC1/QCR1 and UQCRC2/QCR2 are homologous to the 2 mitochondrial-processing peptidase (MPP) subunits beta-MPP and alpha-MPP respectively, and they seem to have preserved their MPP processing properties. May be involved in the in situ processing of UQCRFS1 into the mature Rieske protein and its mitochondrial targeting sequence (MTS)/subunit 9 when incorporated into complex III. Seems to play an important role in the maintenance of proper mitochondrial function in nigral dopaminergic neurons. The sequence is that of Cytochrome b-c1 complex subunit 1, mitochondrial from Mesocricetus auratus (Golden hamster).